Reading from the N-terminus, the 367-residue chain is Peroxisome biogenesis protein 16 (367 aa).

The segment at 135-173 (GGETPNEEKDSNQSESQNRAGNSGRNLGPHGLGNQNHHN) is disordered. Over residues 147-159 (QSESQNRAGNSGR) the composition is skewed to polar residues. The next 2 membrane-spanning stretches (helical) occupy residues 237-257 (ALFA…VLFI) and 264-284 (SWIP…LLAN).

This sequence belongs to the peroxin-16 family. In terms of assembly, interacts with APEM9 (via both N- and C-terminus). Post-translationally, the detection of an additional immunorelated polypeptide of 52 kDa suggests a post-translational modification of PEX16. Expressed in roots, siliques, seeds, cotyledons, leaves and flowers. Low expression in leaves and roots.

The protein localises to the peroxisome membrane. The protein resides in the endoplasmic reticulum membrane. Its function is as follows. Involved in the formation of peroxisomes, lipid bodies and protein bodies. This Arabidopsis thaliana (Mouse-ear cress) protein is Peroxisome biogenesis protein 16.